The primary structure comprises 550 residues: Metal transporter Nramp4 (550 aa).

Positions 1–13 are enriched in basic and acidic residues; the sequence is MEEGAKIGREHEQ. A disordered region spans residues 1–37; the sequence is MEEGAKIGREHEQQQQQHGRVNGSGRVAAVGGGSGGG. The segment covering 14–29 has biased composition (low complexity); the sequence is QQQQHGRVNGSGRVAA. The next 12 helical transmembrane spans lie at 72–92, 105–125, 151–171, 177–197, 207–227, 255–275, 292–312, 354–374, 388–408, 416–436, 457–477, and 492–512; these read FLAHVGPGFVISIAYLDPSNL, SLLWVLLFGFIFVLTVQSLAA, LWLLAELGVIAATIPGVLGTA, LLHIPFWAGVLACGACTFLIL, MEFTISVLMLVMATCFFMELG, VAMFGSLVVPHNLFLHSSLVL, FFLLENALALFIALLVNVAIV, VYGVALLVSGQSCMVATSYAG, IIYLVAPCFTLLPSLIICSIG, IINIAAIVLSFVLPFALIPLI, IAWILSLVIIGINIYFFCTSF, and AIISSLVFPFMAAYIAALIYL.

Belongs to the NRAMP (TC 2.A.55) family.

It is found in the membrane. In terms of biological role, probable metal transporter. The protein is Metal transporter Nramp4 (NRAMP4) of Oryza sativa subsp. japonica (Rice).